Reading from the N-terminus, the 320-residue chain is Aurora kinase B (320 aa).

Residues 1 to 10 (MQNKENREPR) are compositionally biased toward basic and acidic residues. The tract at residues 1–38 (MQNKENREPRVQQTPSAGVGPLRVEMNPDTHAVSGPGR) is disordered. The Protein kinase domain maps to 53–303 (FDIGRPLGKG…LRSVMEHPWV (251 aa)). ATP-binding positions include 59–67 (LGKGKFGNV) and Lys-82. The active-site Proton acceptor is the Asp-176.

This sequence belongs to the protein kinase superfamily. Ser/Thr protein kinase family. Aurora subfamily. In terms of assembly, component of the chromosomal passenger complex (CPC).

Its subcellular location is the nucleus. It is found in the chromosome. It localises to the centromere. The protein resides in the cytoplasm. The protein localises to the cytoskeleton. Its subcellular location is the spindle. It is found in the midbody. It carries out the reaction L-seryl-[protein] + ATP = O-phospho-L-seryl-[protein] + ADP + H(+). It catalyses the reaction L-threonyl-[protein] + ATP = O-phospho-L-threonyl-[protein] + ADP + H(+). Kinase activity is stimulated by cell-cycle specific phosphorylation. In terms of biological role, serine/threonine-protein kinase component of the chromosomal passenger complex (CPC), a complex that acts as a key regulator of mitosis. The CPC complex has essential functions at the centromere in ensuring correct chromosome alignment and segregation and is required for chromatin-induced microtubule stabilization and spindle assembly. Involved in the bipolar attachment of spindle microtubules to kinetochores and is a key regulator for the onset of cytokinesis during mitosis. Required for central/midzone spindle assembly and cleavage furrow formation. Key component of the cytokinesis checkpoint, a process required to delay abscission to prevent both premature resolution of intercellular chromosome bridges and accumulation of DNA damage. Phosphorylates 'Ser-10' of histone H3 during mitosis. This Danio rerio (Zebrafish) protein is Aurora kinase B (aurkb).